A 103-amino-acid chain; its full sequence is Histone H4 (103 aa).

The segment covering 1-14 (MSGRGKGGKGLGKG) has biased composition (gly residues). Residues 1-20 (MSGRGKGGKGLGKGGAKRHR) are disordered. Ser-2 bears the N-acetylserine mark. Lys-17 carries the post-translational modification N6-acetyllysine. Residues 17–21 (KRHRR) mediate DNA binding. Residue Lys-80 is modified to N6-methylated lysine.

The protein belongs to the histone H4 family. In terms of assembly, the nucleosome is a histone octamer containing two molecules each of H2A, H2B, H3 and H4 assembled in one H3-H4 heterotetramer and two H2A-H2B heterodimers. The octamer wraps approximately 147 bp of DNA.

The protein resides in the nucleus. It is found in the chromosome. Functionally, core component of nucleosome. Nucleosomes wrap and compact DNA into chromatin, limiting DNA accessibility to the cellular machineries which require DNA as a template. Histones thereby play a central role in transcription regulation, DNA repair, DNA replication and chromosomal stability. DNA accessibility is regulated via a complex set of post-translational modifications of histones, also called histone code, and nucleosome remodeling. This chain is Histone H4, found in Olisthodiscus luteus (Marine phytoflagellate).